We begin with the raw amino-acid sequence, 258 residues long: Imidazole glycerol phosphate synthase subunit HisF (258 aa).

Catalysis depends on residues Asp11 and Asp130.

Belongs to the HisA/HisF family. Heterodimer of HisH and HisF.

The protein localises to the cytoplasm. It carries out the reaction 5-[(5-phospho-1-deoxy-D-ribulos-1-ylimino)methylamino]-1-(5-phospho-beta-D-ribosyl)imidazole-4-carboxamide + L-glutamine = D-erythro-1-(imidazol-4-yl)glycerol 3-phosphate + 5-amino-1-(5-phospho-beta-D-ribosyl)imidazole-4-carboxamide + L-glutamate + H(+). It participates in amino-acid biosynthesis; L-histidine biosynthesis; L-histidine from 5-phospho-alpha-D-ribose 1-diphosphate: step 5/9. Functionally, IGPS catalyzes the conversion of PRFAR and glutamine to IGP, AICAR and glutamate. The HisF subunit catalyzes the cyclization activity that produces IGP and AICAR from PRFAR using the ammonia provided by the HisH subunit. The chain is Imidazole glycerol phosphate synthase subunit HisF from Shigella sonnei (strain Ss046).